Consider the following 220-residue polypeptide: Fructose-6-phosphate aldolase (220 aa).

Catalysis depends on lysine 85, which acts as the Schiff-base intermediate with substrate.

Belongs to the transaldolase family. Type 3A subfamily. In terms of assembly, homodecamer.

The protein resides in the cytoplasm. It catalyses the reaction beta-D-fructose 6-phosphate = dihydroxyacetone + D-glyceraldehyde 3-phosphate. Catalyzes the reversible formation of fructose 6-phosphate from dihydroxyacetone and D-glyceraldehyde 3-phosphate via an aldolization reaction. The polypeptide is Fructose-6-phosphate aldolase (Klebsiella pneumoniae subsp. pneumoniae (strain ATCC 700721 / MGH 78578)).